The sequence spans 119 residues: Ribonuclease P protein component (119 aa).

This sequence belongs to the RnpA family. In terms of assembly, consists of a catalytic RNA component (M1 or rnpB) and a protein subunit.

The catalysed reaction is Endonucleolytic cleavage of RNA, removing 5'-extranucleotides from tRNA precursor.. RNaseP catalyzes the removal of the 5'-leader sequence from pre-tRNA to produce the mature 5'-terminus. It can also cleave other RNA substrates such as 4.5S RNA. The protein component plays an auxiliary but essential role in vivo by binding to the 5'-leader sequence and broadening the substrate specificity of the ribozyme. In Salmonella arizonae (strain ATCC BAA-731 / CDC346-86 / RSK2980), this protein is Ribonuclease P protein component.